Here is a 1886-residue protein sequence, read N- to C-terminus: Highly reducing polyketide synthase (1886 aa).

Residues 11 to 434 form the Ketosynthase family 3 (KS3) domain; that stretch reads TQDVAIVGLS…GANAHAVLDD (424 aa). Active-site for beta-ketoacyl synthase activity residues include Cys-182, His-317, and His-357. The segment at 483–568 is malonyl-CoA:ACP transacylase (MAT) domain; that stretch reads FLFSGQDQQS…VNNDLANTKK (86 aa). Residues 616 to 750 form an N-terminal hotdog fold region; it reads RSLIGAPQPS…GLLSIEYESS (135 aa). The region spanning 616 to 926 is the PKS/mFAS DH domain; it reads RSLIGAPQPS…CTAISEATNP (311 aa). Residues 618 to 924 are dehydratase (DH) domain; the sequence is LIGAPQPSYG…LHCTAISEAT (307 aa). The active-site Proton acceptor; for dehydratase activity is His-648. The C-terminal hotdog fold stretch occupies residues 778 to 926; the sequence is HTTQSPKALY…CTAISEATNP (149 aa). Asp-838 serves as the catalytic Proton donor; for dehydratase activity. An enoylreductase (ER) domain region spans residues 1169–1480; it reads GMLDEIYFEA…AGKHMGKVAL (312 aa). The segment at 1503 to 1681 is catalytic ketoreductase (KRc) domain; that stretch reads ATYVLVGGFG…VSLDLGLMRD (179 aa). The Carrier domain maps to 1802–1879; sequence DVTDLVLEIL…DLVDKIVAKS (78 aa). O-(pantetheine 4'-phosphoryl)serine is present on Ser-1839.

It participates in mycotoxin biosynthesis. Functionally, highly reducing polyketide synthase; part of the gene cluster that mediates the biosynthesis of the selective antifungal agent ascochitine, an o-quinone methide that plays a possible protective role against other microbial competitors in nature and is considered to be important for pathogenicity of legume-associated Didymella species. The pathway probably begins with the synthesis of a keto-aldehyde intermediate by the ascochitine non-reducing polyketide synthase pksAC from successive condensations of 4 malonyl-CoA units, presumably with a simple acetyl-CoA starter unit. Release of the keto-aldehyde intermediate is consistent with the presence of the C-terminal reductive release domain. The HR-PKS (orf7) probably makes a diketide starter unit which is passed to the non-reducing polyketide synthase pksAC for further extension, producing ascochital and ascochitine. The aldehyde dehydrogenase (orf1), the 2-oxoglutarate-dependent dioxygenase (orf3) and the dehydrogenase (orf9) are probably involved in subsequent oxidations of methyl groups to the carboxylic acid of the heterocyclic ring. The ascochitine gene cluster also includes a gene encoding a short peptide with a cupin domain (orf2) that is often found in secondary metabolite gene clusters and which function has still to be determined. This Didymella fabae (Leaf and pod spot disease fungus) protein is Highly reducing polyketide synthase.